We begin with the raw amino-acid sequence, 490 residues long: Aspartyl/glutamyl-tRNA(Asn/Gln) amidotransferase subunit B (490 aa).

Belongs to the GatB/GatE family. GatB subfamily. Heterotrimer of A, B and C subunits.

It carries out the reaction L-glutamyl-tRNA(Gln) + L-glutamine + ATP + H2O = L-glutaminyl-tRNA(Gln) + L-glutamate + ADP + phosphate + H(+). The catalysed reaction is L-aspartyl-tRNA(Asn) + L-glutamine + ATP + H2O = L-asparaginyl-tRNA(Asn) + L-glutamate + ADP + phosphate + 2 H(+). In terms of biological role, allows the formation of correctly charged Asn-tRNA(Asn) or Gln-tRNA(Gln) through the transamidation of misacylated Asp-tRNA(Asn) or Glu-tRNA(Gln) in organisms which lack either or both of asparaginyl-tRNA or glutaminyl-tRNA synthetases. The reaction takes place in the presence of glutamine and ATP through an activated phospho-Asp-tRNA(Asn) or phospho-Glu-tRNA(Gln). This is Aspartyl/glutamyl-tRNA(Asn/Gln) amidotransferase subunit B from Methylorubrum extorquens (strain PA1) (Methylobacterium extorquens).